Consider the following 236-residue polypeptide: uncharacterized protein (236 aa).

This is an uncharacterized protein from Escherichia coli O157:H7.